A 211-amino-acid polypeptide reads, in one-letter code: Probable superoxide dismutase [Mn], mitochondrial (211 aa).

Histidine 36, histidine 84, aspartate 173, and histidine 177 together coordinate Mn(2+).

Belongs to the iron/manganese superoxide dismutase family. Homotetramer. Requires Mn(2+) as cofactor.

The protein localises to the mitochondrion matrix. It carries out the reaction 2 superoxide + 2 H(+) = H2O2 + O2. Its function is as follows. Destroys superoxide anion radicals which are normally produced within the cells and which are toxic to biological systems. This chain is Probable superoxide dismutase [Mn], mitochondrial, found in Debaryomyces hansenii (strain ATCC 36239 / CBS 767 / BCRC 21394 / JCM 1990 / NBRC 0083 / IGC 2968) (Yeast).